A 283-amino-acid chain; its full sequence is Non-selective voltage-gated ion channel VDAC1 (283 aa).

A2 is modified (N-acetylalanine). Residue K12 participates in ATP binding. A Glycyl lysine isopeptide (Lys-Gly) (interchain with G-Cter in ubiquitin) cross-link involves residue K12. S13 carries the phosphoserine modification. The residue at position 19 (T19) is a Phosphothreonine. K20 lines the ATP pocket. The residue at position 20 (K20) is an N6-acetyllysine; alternate. The residue at position 20 (K20) is an N6-succinyllysine; alternate. K20 is covalently cross-linked (Glycyl lysine isopeptide (Lys-Gly) (interchain with G-Cter in ubiquitin); alternate). Beta stranded transmembrane passes span 26 to 35 and 39 to 47; these read LIKLDLKTKS and LEFTSSGSA. Residues K53 and K61 each participate in a glycyl lysine isopeptide (Lys-Gly) (interchain with G-Cter in ubiquitin) cross-link. Residues 54–64 form a beta stranded membrane-spanning segment; it reads VNGSLETKYRW. The residue at position 67 (Y67) is a Phosphotyrosine. A run of 3 beta stranded transmembrane segments spans residues 69 to 76, 80 to 89, and 95 to 104; these read LTFTEKWN, TLGTEITVED, and LKLTFDSSFS. Position 107 is a phosphothreonine (T107). At K109 the chain carries N6-acetyllysine; alternate. A Glycyl lysine isopeptide (Lys-Gly) (interchain with G-Cter in ubiquitin); alternate cross-link involves residue K109. K110 is covalently cross-linked (Glycyl lysine isopeptide (Lys-Gly) (interchain with G-Cter in ubiquitin)). Beta stranded transmembrane passes span 111 to 120, 123 to 130, 137 to 145, and 150 to 158; these read NAKIKTGYKR, INLGCDVD, SIRGALVLG, and LAGYQMNFE. Residue S137 is modified to Phosphoserine. K161 is covalently cross-linked (Glycyl lysine isopeptide (Lys-Gly) (interchain with G-Cter in ubiquitin)). A run of 6 beta stranded transmembrane segments spans residues 163 to 175, 178 to 185, 189 to 198, 202 to 211, 218 to 227, and 231 to 238; these read RVTQSNFAVGYKT, FQLHTNVN, EFGGSIYQKV, LETAVNLAWT, RFGIAAKYQV, and ACFSAKVN. Position 193 is a phosphoserine; by NEK1 (S193). Phosphoserine is present on S240. NAD(+) is bound at residue 242–244; sequence LIG. Residues 242–251 traverse the membrane as a beta stranded segment; sequence LIGLGYTQTL. K252 carries the post-translational modification N6-acetyllysine. Residues 254–263 form a beta stranded membrane-spanning segment; it reads GIKLTLSALL. Residue 260-264 coordinates NAD(+); sequence SALLD. Residue K266 is modified to N6-acetyllysine; alternate. A Glycyl lysine isopeptide (Lys-Gly) (interchain with G-Cter in ubiquitin); alternate cross-link involves residue K266. The chain crosses the membrane as a beta stranded span at residues 273–282; the sequence is HKLGLGLEFQ. K274 participates in a covalent cross-link: Glycyl lysine isopeptide (Lys-Gly) (interchain with G-Cter in ubiquitin).

The protein belongs to the eukaryotic mitochondrial porin family. Homodimer and homotrimer; in response to cyclic AMP or calcium; oligomerization is required for scramblase activity. Component of the mitochondrial permeability transition pore complex (mPTPC), at least composed of SPG7, VDAC1 and PPIF. Interacts with SPG7, NIPSNAP2 and SLC25A30. Interacts with hexokinases including HK1. The HK1-VDAC1 complex interacts with ATF2. Interacts with BCL2L1. Interacts with BAK1. Interacts with RTL10/BOP (via BH3 domain). Interacts with amyloid-beta and APP; induces VDAC1 dephosphorylation. Interacts with TMEM41B. Interacts with BCAP31. Interacts with HSPA9; this interaction couples ITPR1 to VDAC1. In terms of processing, phosphorylation at Ser-193 by NEK1 promotes the closed conformational state preventing excessive mitochondrial membrane permeability and subsequent apoptotic cell death after injury. Phosphorylation by the AKT-GSK3B axis stabilizes the protein probably by preventing ubiquitin-mediated proteasomal degradation. Ubiquitinated. Undergoes monoubiquitination and polyubiquitination by PRKN; monoubiquitination at Lys-274 inhibits apoptosis, whereas polyubiquitination leads to its degradation and promotes mitophagy. Deubiquitinated by USP30. In terms of tissue distribution, widely expressed. High levels in heart and kidney with lower levels in brain and ascitic tumor. Very low levels in liver.

It localises to the mitochondrion outer membrane. It is found in the cell membrane. The protein resides in the membrane raft. The catalysed reaction is Ca(2+)(in) = Ca(2+)(out). The enzyme catalyses Na(+)(in) = Na(+)(out). It catalyses the reaction chloride(in) = chloride(out). It carries out the reaction Mg(2+)(in) = Mg(2+)(out). The catalysed reaction is K(+)(in) = K(+)(out). The enzyme catalyses ATP(in) = ATP(out). It catalyses the reaction L-glutamate(out) = L-glutamate(in). It carries out the reaction dopamine(out) = dopamine(in). The catalysed reaction is acetylcholine(in) = acetylcholine(out). The enzyme catalyses Fe(III)-[cytochrome c](out) = Fe(III)-[cytochrome c](in). It catalyses the reaction a 1,2-diacyl-sn-glycero-3-phosphocholine(in) = a 1,2-diacyl-sn-glycero-3-phosphocholine(out). It carries out the reaction a 1,2-diacyl-sn-glycero-3-phospho-L-serine(in) = a 1,2-diacyl-sn-glycero-3-phospho-L-serine(out). Its activity is regulated as follows. Inhibited by nitric oxide. Voltage-gated ion channel activity is inhibited by lanthanum(3+) and ruthenium red. Mitochondrial calcium transport is inhibited by lanthanum(3+), ruthenium red and Ru360. Functionally, non-selective voltage-gated ion channel that mediates the transport of anions and cations through the mitochondrion outer membrane and plasma membrane. The channel at the outer mitochondrial membrane allows diffusion of small hydrophilic molecules; in the plasma membrane it is involved in cell volume regulation and apoptosis. It adopts an open conformation at low or zero membrane potential and a closed conformation at potentials above 30-40 mV. The open state has a weak anion selectivity whereas the closed state is cation-selective. Binds various signaling molecules, including the sphingolipid ceramide, the phospholipid phosphatidylcholine, and the sterols cholesterol and oxysterol. In depolarized mitochondria, acts downstream of PRKN and PINK1 to promote mitophagy or prevent apoptosis; polyubiquitination by PRKN promotes mitophagy, while monoubiquitination by PRKN decreases mitochondrial calcium influx which ultimately inhibits apoptosis. May participate in the formation of the permeability transition pore complex (PTPC) responsible for the release of mitochondrial products that triggers apoptosis. May mediate ATP export from cells. Part of a complex composed of HSPA9, ITPR1 and VDAC1 that regulates mitochondrial calcium-dependent apoptosis by facilitating calcium transport from the ER lumen to the mitochondria intermembrane space thus providing calcium for the downstream calcium channel MCU that directly releases it into mitochondria matrix. In terms of biological role, catalyzes the scrambling of phospholipids across the outer mitochondrial membrane; the mechanism is unrelated to channel activity and is capable of translocating both anionic and zwitterionic phospholipids. The protein is Non-selective voltage-gated ion channel VDAC1 of Rattus norvegicus (Rat).